We begin with the raw amino-acid sequence, 272 residues long: MVVLENPEAGPEEAAAAARVVPGGRRTLPLPGCLPALASSQVKRLSASRRKQHFINQAVRNSDLVPKAKGRKSLQRLENTQYLLTLLETDGATPGPEDGDLAPPAAPGIFAEACSNETYVEIWNDFMNRSGEEQERVLRYLEDEGKSKARRRGPTRGEDRRREDPAYTPRECFQRISRRLRAVLKRSRIPMETLETWEERLLRFFSVSPQAVYTAMLDNSFERLLLHAICQYMDLISASADLEGKRQMKVSNRHLDFLPPGLLLSAYLEQRS.

Residues 141 to 167 form a disordered region; sequence LEDEGKSKARRRGPTRGEDRRREDPAY. A compositionally biased stretch (basic and acidic residues) spans 155–165; it reads TRGEDRRREDP. Residues 191-254 enclose the R3H domain; the sequence is METLETWEER…KRQMKVSNRH (64 aa).

It localises to the nucleus. The sequence is that of R3H domain-containing protein 4 (R3HDM4) from Bos taurus (Bovine).